We begin with the raw amino-acid sequence, 299 residues long: F-actin-capping protein subunit alpha-3 (299 aa).

A Phosphoserine modification is found at Ser290.

This sequence belongs to the F-actin-capping protein alpha subunit family. In terms of assembly, component of the F-actin capping complex, composed of a heterodimer of an alpha and a beta subunit. Component of the WASH complex, composed of F-actin-capping protein subunit alpha (CAPZA1, CAPZA2 or CAPZA3), F-actin-capping protein subunit beta (CAPZB), WASHC1, WASHC2, WASHC3, WASHC4 and WASHC5.

Its function is as follows. F-actin-capping proteins bind in a Ca(2+)-independent manner to the fast growing ends of actin filaments (barbed end) thereby blocking the exchange of subunits at these ends. Unlike other capping proteins (such as gelsolin and severin), these proteins do not sever actin filaments. May play a role in the morphogenesis of spermatid. The chain is F-actin-capping protein subunit alpha-3 (CAPZA3) from Macaca fascicularis (Crab-eating macaque).